Here is a 339-residue protein sequence, read N- to C-terminus: Nicotinate-nucleotide--dimethylbenzimidazole phosphoribosyltransferase (339 aa).

E306 serves as the catalytic Proton acceptor.

This sequence belongs to the CobT family.

It catalyses the reaction 5,6-dimethylbenzimidazole + nicotinate beta-D-ribonucleotide = alpha-ribazole 5'-phosphate + nicotinate + H(+). The protein operates within nucleoside biosynthesis; alpha-ribazole biosynthesis; alpha-ribazole from 5,6-dimethylbenzimidazole: step 1/2. Functionally, catalyzes the synthesis of alpha-ribazole-5'-phosphate from nicotinate mononucleotide (NAMN) and 5,6-dimethylbenzimidazole (DMB). The chain is Nicotinate-nucleotide--dimethylbenzimidazole phosphoribosyltransferase from Brucella canis (strain ATCC 23365 / NCTC 10854 / RM-666).